We begin with the raw amino-acid sequence, 424 residues long: MSLDSPTFGCTDSPVRRERGQKAVFCGLTSIVWLHRKMQDAFFLVVGSRTCAHLLQAAAGVMIFAEPRFGTAVLEEQDLAGLADAHKELDREVAKLLERRPDIRQLFLVGSCPSEVLKLDLDRAAERLSGLHAPHVRVYSYTGSGLDTTFTQGEDTCLAAMVPTLDTTEAAELIVVGALPDVVEDQCLSLLTQLGVGPVRMLPARRSDIEPAVGPNTRFILAQPFLGETTGALERRGAKRIAAPFPFGEEGTTLWLKAVADAYGVSAEKFEAVTAAPRARAKKAIAAHLETLTGKSLFMFPDSQLEIPLARFLARECGMKTTEIATPFLHKAIMAPDLALLPSNTALTEGQDLEAQLDRHEAINPDLTVCGLGLANPLEAKGHATKWAIELVFTPVHFYEQAGDLAGLFSRPLRRRALLNGGAA.

The [4Fe-4S] cluster site is built by Cys-26, Cys-51, and Cys-112.

The protein belongs to the BchN/ChlN family. Protochlorophyllide reductase is composed of three subunits; BchL, BchN and BchB. Forms a heterotetramer of two BchB and two BchN subunits. [4Fe-4S] cluster is required as a cofactor.

It catalyses the reaction chlorophyllide a + oxidized 2[4Fe-4S]-[ferredoxin] + 2 ADP + 2 phosphate = protochlorophyllide a + reduced 2[4Fe-4S]-[ferredoxin] + 2 ATP + 2 H2O. It participates in porphyrin-containing compound metabolism; bacteriochlorophyll biosynthesis (light-independent). Its function is as follows. Component of the dark-operative protochlorophyllide reductase (DPOR) that uses Mg-ATP and reduced ferredoxin to reduce ring D of protochlorophyllide (Pchlide) to form chlorophyllide a (Chlide). This reaction is light-independent. The NB-protein (BchN-BchB) is the catalytic component of the complex. This chain is Light-independent protochlorophyllide reductase subunit N, found in Rhodobacter capsulatus (strain ATCC BAA-309 / NBRC 16581 / SB1003).